Here is a 193-residue protein sequence, read N- to C-terminus: FMN-dependent NADH:quinone oxidoreductase (193 aa).

FMN is bound by residues Ser9, 15–17 (SSS), and 137–140 (TSGG).

Belongs to the azoreductase type 1 family. As to quaternary structure, homodimer. It depends on FMN as a cofactor.

The catalysed reaction is 2 a quinone + NADH + H(+) = 2 a 1,4-benzosemiquinone + NAD(+). It catalyses the reaction N,N-dimethyl-1,4-phenylenediamine + anthranilate + 2 NAD(+) = 2-(4-dimethylaminophenyl)diazenylbenzoate + 2 NADH + 2 H(+). Functionally, quinone reductase that provides resistance to thiol-specific stress caused by electrophilic quinones. Also exhibits azoreductase activity. Catalyzes the reductive cleavage of the azo bond in aromatic azo compounds to the corresponding amines. The protein is FMN-dependent NADH:quinone oxidoreductase of Pelagibacter ubique (strain HTCC1062).